The primary structure comprises 225 residues: Small ribosomal subunit protein uS3 (225 aa).

Residues 16 to 85 enclose the KH type-2 domain; that stretch reads VCEYVVKETE…TPQIEVKDVK (70 aa). Positions 202–225 are disordered; sequence EVGTESKADQTDVEGRETGNAEES. The segment covering 205–225 has biased composition (basic and acidic residues); that stretch reads TESKADQTDVEGRETGNAEES.

It belongs to the universal ribosomal protein uS3 family. Part of the 30S ribosomal subunit.

Its function is as follows. Binds the lower part of the 30S subunit head. The sequence is that of Small ribosomal subunit protein uS3 from Thermoplasma acidophilum (strain ATCC 25905 / DSM 1728 / JCM 9062 / NBRC 15155 / AMRC-C165).